Consider the following 84-residue polypeptide: Cytochrome b559 subunit alpha (84 aa).

Residues 24-38 (IIHAVTLPAIFIAGF) form a helical membrane-spanning segment. Heme is bound at residue H26.

The protein belongs to the PsbE/PsbF family. In terms of assembly, heterodimer of an alpha subunit and a beta subunit. PSII is composed of 1 copy each of membrane proteins PsbA, PsbB, PsbC, PsbD, PsbE, PsbF, PsbH, PsbI, PsbJ, PsbK, PsbL, PsbM, PsbT, PsbX, PsbY, Psb30/Ycf12, peripheral proteins PsbO, CyanoQ (PsbQ), PsbU, PsbV and a large number of cofactors. It forms dimeric complexes. Heme b is required as a cofactor.

It localises to the cellular thylakoid membrane. Its function is as follows. This b-type cytochrome is tightly associated with the reaction center of photosystem II (PSII). PSII is a light-driven water:plastoquinone oxidoreductase that uses light energy to abstract electrons from H(2)O, generating O(2) and a proton gradient subsequently used for ATP formation. It consists of a core antenna complex that captures photons, and an electron transfer chain that converts photonic excitation into a charge separation. The chain is Cytochrome b559 subunit alpha from Prochlorococcus marinus subsp. pastoris (strain CCMP1986 / NIES-2087 / MED4).